We begin with the raw amino-acid sequence, 708 residues long: Fatty acid oxidation complex subunit alpha (708 aa).

The segment at 1 to 190 (MSQDKAFTME…KAGLVTEVVP (190 aa)) is enoyl-CoA hydratase. Positions 310–708 (DSVKRVGVLG…MLENGWNFYQ (399 aa)) are 3-hydroxyacyl-CoA dehydrogenase.

This sequence in the N-terminal section; belongs to the enoyl-CoA hydratase/isomerase family. In the central section; belongs to the 3-hydroxyacyl-CoA dehydrogenase family. In terms of assembly, heterotetramer of two alpha chains (FadJ) and two beta chains (FadI).

It localises to the cytoplasm. It catalyses the reaction a (3S)-3-hydroxyacyl-CoA = a (2E)-enoyl-CoA + H2O. The catalysed reaction is a 4-saturated-(3S)-3-hydroxyacyl-CoA = a (3E)-enoyl-CoA + H2O. It carries out the reaction a (3S)-3-hydroxyacyl-CoA + NAD(+) = a 3-oxoacyl-CoA + NADH + H(+). The enzyme catalyses (3S)-3-hydroxybutanoyl-CoA = (3R)-3-hydroxybutanoyl-CoA. The protein operates within lipid metabolism; fatty acid beta-oxidation. Catalyzes the formation of a hydroxyacyl-CoA by addition of water on enoyl-CoA. Also exhibits 3-hydroxyacyl-CoA epimerase and 3-hydroxyacyl-CoA dehydrogenase activities. In Idiomarina loihiensis (strain ATCC BAA-735 / DSM 15497 / L2-TR), this protein is Fatty acid oxidation complex subunit alpha.